An 855-amino-acid chain; its full sequence is Dynein axonemal assembly factor 5 (855 aa).

Ala2 carries the N-acetylalanine modification. HEAT repeat units lie at residues Gly71 to Arg109, His202 to Gly240, Lys241 to Asp278, Tyr280 to Lys318, Phe354 to Arg376, Val377 to Ala414, Gly599 to Asp638, Arg696 to Gly734, Pro738 to Gly776, and Gln784 to Asp822.

This sequence belongs to the DNAAF5 family. In terms of assembly, interacts with DNAI2; probably involved in outer arm dynein assembly. As to expression, expressed in nasal epithelium and lung epithelium by ciliated cells (at protein level).

The protein resides in the cytoplasm. It is found in the dynein axonemal particle. Its function is as follows. Cytoplasmic protein involved in the delivery of the dynein machinery to the motile cilium. It is required for the assembly of the axonemal dynein inner and outer arms, two structures attached to the peripheral outer doublet A microtubule of the axoneme, that play a crucial role in cilium motility. The sequence is that of Dynein axonemal assembly factor 5 from Homo sapiens (Human).